The chain runs to 198 residues: FMN-dependent NADH:quinone oxidoreductase (198 aa).

92-95 (MWNL) is a binding site for FMN.

Belongs to the azoreductase type 1 family. Homodimer. Requires FMN as cofactor.

The catalysed reaction is 2 a quinone + NADH + H(+) = 2 a 1,4-benzosemiquinone + NAD(+). It catalyses the reaction N,N-dimethyl-1,4-phenylenediamine + anthranilate + 2 NAD(+) = 2-(4-dimethylaminophenyl)diazenylbenzoate + 2 NADH + 2 H(+). Functionally, quinone reductase that provides resistance to thiol-specific stress caused by electrophilic quinones. In terms of biological role, also exhibits azoreductase activity. Catalyzes the reductive cleavage of the azo bond in aromatic azo compounds to the corresponding amines. This is FMN-dependent NADH:quinone oxidoreductase from Lachnoclostridium phytofermentans (strain ATCC 700394 / DSM 18823 / ISDg) (Clostridium phytofermentans).